Consider the following 299-residue polypeptide: Cytidine deaminase (299 aa).

CMP/dCMP-type deaminase domains are found at residues 56–176 (SKIE…FGPK) and 194–299 (LQGD…YIAV). Substrate is bound at residue 97–99 (NQE). His-110 provides a ligand contact to Zn(2+). Glu-112 acts as the Proton donor in catalysis. Positions 137 and 140 each coordinate Zn(2+).

Belongs to the cytidine and deoxycytidylate deaminase family. As to quaternary structure, homodimer. It depends on Zn(2+) as a cofactor.

It carries out the reaction cytidine + H2O + H(+) = uridine + NH4(+). The enzyme catalyses 2'-deoxycytidine + H2O + H(+) = 2'-deoxyuridine + NH4(+). This enzyme scavenges exogenous and endogenous cytidine and 2'-deoxycytidine for UMP synthesis. This is Cytidine deaminase from Haemophilus ducreyi (strain 35000HP / ATCC 700724).